The sequence spans 247 residues: Proteasome subunit alpha type-7-1 (247 aa).

The protein belongs to the peptidase T1A family. The 26S proteasome consists of a 20S proteasome core and two 19S regulatory subunits. The 20S proteasome core is composed of 28 subunits that are arranged in four stacked rings, resulting in a barrel-shaped structure. The two end rings are each formed by seven alpha subunits, and the two central rings are each formed by seven beta subunits. The catalytic chamber with the active sites is on the inside of the barrel.

The protein resides in the cytoplasm. It is found in the nucleus. The proteasome is a multicatalytic proteinase complex which is characterized by its ability to cleave peptides with Arg, Phe, Tyr, Leu, and Glu adjacent to the leaving group at neutral or slightly basic pH. The proteasome has an ATP-dependent proteolytic activity. This Drosophila virilis (Fruit fly) protein is Proteasome subunit alpha type-7-1 (Pros28.1).